Reading from the N-terminus, the 316-residue chain is Protease HtpX homolog (316 aa).

A helical transmembrane segment spans residues Leu16 to Val36. His130 contributes to the Zn(2+) binding site. The active site involves Glu131. His134 contributes to the Zn(2+) binding site. The next 2 membrane-spanning stretches (helical) occupy residues Met145–Ala165 and Leu174–Ile194. Residue Glu199 coordinates Zn(2+). Residues Pro285–Gly316 are disordered.

It belongs to the peptidase M48B family. The cofactor is Zn(2+).

It localises to the cell inner membrane. This chain is Protease HtpX homolog, found in Rhizorhabdus wittichii (strain DSM 6014 / CCUG 31198 / JCM 15750 / NBRC 105917 / EY 4224 / RW1) (Sphingomonas wittichii).